Here is a 281-residue protein sequence, read N- to C-terminus: Leukocyte antigen CD37 (281 aa).

Over 1 to 17 the chain is Cytoplasmic; the sequence is MSAQESCLSLIKYFLFV. A helical transmembrane segment spans residues 18-38; the sequence is FNLFFFVLGSLIFCFGIWILI. Residues 39–59 lie on the Extracellular side of the membrane; sequence DKTSFVSFVGLAFVPLQIWSK. Residues 60–74 traverse the membrane as a helical segment; the sequence is VLAISGIFTMGIALL. Topologically, residues 75–85 are cytoplasmic; it reads GCVGALKELRC. A helical membrane pass occupies residues 86-111; that stretch reads LLGLYFGMLLLLFATQITLGILISTQ. Over 112 to 241 the chain is Extracellular; that stretch reads RAQLERSLRD…QGLQKWLHNN (130 aa). 3 N-linked (GlcNAc...) asparagine glycosylation sites follow: asparagine 170, asparagine 183, and asparagine 188. A helical transmembrane segment spans residues 242-266; sequence LISIVGICLGVGLLELGFMTLSIFL. Topologically, residues 267–281 are cytoplasmic; that stretch reads CRNLDHVYNRLARYR.

It belongs to the tetraspanin (TM4SF) family. As to quaternary structure, interacts with SCIMP. Interacts with SOCS3. Interacts with DECTIN1/CLEC7A. Post-translationally, tyrosine phosphorylated; leading to activation of downstream signaling pathways. As to expression, B-lymphocytes. Antigen presenting cells.

Its subcellular location is the cell membrane. Functionally, structural component of specialized membrane microdomains known as tetraspanin-enriched microdomains (TERMs), which act as platforms for receptor clustering and signaling. Participates thereby in diverse biological functions such as cell signal transduction, adhesion, migration and protein trafficking. Upon ligand binding, two signaling pathways are activated, one acting through phosphorylation by LYN leading to cell death or a survival pathway with activation of GSK3B. Plays an essential role essential for clustering of integrin ITGA4/ITGB1 and promotes its mobility in the plasma membrane of B-cells. In turn, participates in ITGA4/ITGB1 integrin-mediated antiapoptotic signaling through AKT. Also plays a role in the migration of dendritic cells and neutrophils to draining lymph nodes, as well as in their integrin-mediated adhesion. Negatively regulates IL-6 responses through direct interaction with SOCS3 thereby preventing constitutive IL-6 signaling. Alternatively, inhibition of IL-6 signaling can also occur via interaction and stabilization of DECTIN1/CLEC7A at the cell membrane to inhibit its ability to promote the production of IL-6. In Homo sapiens (Human), this protein is Leukocyte antigen CD37 (CD37).